We begin with the raw amino-acid sequence, 264 residues long: ATP synthase subunit a (264 aa).

5 consecutive transmembrane segments (helical) span residues 39 to 59 (LDTLIISVVLGALFILIFYIV), 97 to 117 (VAPLALTIFIWVFLMNFMDLV), 139 to 159 (TADPTLTFAMSITVFVLVIFY), 205 to 225 (LFGNLFAGELIFILIALLPWW), and 239 to 259 (LLVITVQAFIFMMLTVVYISL).

It belongs to the ATPase A chain family. In terms of assembly, F-type ATPases have 2 components, CF(1) - the catalytic core - and CF(0) - the membrane proton channel. CF(1) has five subunits: alpha(3), beta(3), gamma(1), delta(1), epsilon(1). CF(0) has three main subunits: a(1), b(2) and c(9-12). The alpha and beta chains form an alternating ring which encloses part of the gamma chain. CF(1) is attached to CF(0) by a central stalk formed by the gamma and epsilon chains, while a peripheral stalk is formed by the delta and b chains.

Its subcellular location is the cell inner membrane. In terms of biological role, key component of the proton channel; it plays a direct role in the translocation of protons across the membrane. The chain is ATP synthase subunit a from Coxiella burnetii (strain RSA 331 / Henzerling II).